A 382-amino-acid chain; its full sequence is ATP phosphoribosyltransferase regulatory subunit (382 aa).

This sequence belongs to the class-II aminoacyl-tRNA synthetase family. HisZ subfamily. In terms of assembly, heteromultimer composed of HisG and HisZ subunits.

The protein localises to the cytoplasm. It participates in amino-acid biosynthesis; L-histidine biosynthesis; L-histidine from 5-phospho-alpha-D-ribose 1-diphosphate: step 1/9. Its function is as follows. Required for the first step of histidine biosynthesis. May allow the feedback regulation of ATP phosphoribosyltransferase activity by histidine. The chain is ATP phosphoribosyltransferase regulatory subunit from Lacticaseibacillus paracasei (strain ATCC 334 / BCRC 17002 / CCUG 31169 / CIP 107868 / KCTC 3260 / NRRL B-441) (Lactobacillus paracasei).